The primary structure comprises 237 residues: Ribonuclease PH (237 aa).

Phosphate is bound by residues arginine 86 and 124-126 (GTR).

This sequence belongs to the RNase PH family. In terms of assembly, homohexameric ring arranged as a trimer of dimers.

The enzyme catalyses tRNA(n+1) + phosphate = tRNA(n) + a ribonucleoside 5'-diphosphate. Phosphorolytic 3'-5' exoribonuclease that plays an important role in tRNA 3'-end maturation. Removes nucleotide residues following the 3'-CCA terminus of tRNAs; can also add nucleotides to the ends of RNA molecules by using nucleoside diphosphates as substrates, but this may not be physiologically important. Probably plays a role in initiation of 16S rRNA degradation (leading to ribosome degradation) during starvation. The polypeptide is Ribonuclease PH (Rhodopseudomonas palustris (strain HaA2)).